The chain runs to 209 residues: Thiamine-phosphate synthase (209 aa).

4-amino-2-methyl-5-(diphosphooxymethyl)pyrimidine contacts are provided by residues 38 to 42 (QYRAK) and Asn70. The Mg(2+) site is built by Asp71 and Asp90. Ser109 provides a ligand contact to 4-amino-2-methyl-5-(diphosphooxymethyl)pyrimidine. A 2-[(2R,5Z)-2-carboxy-4-methylthiazol-5(2H)-ylidene]ethyl phosphate-binding site is contributed by 135 to 137 (TST). Position 138 (Lys138) interacts with 4-amino-2-methyl-5-(diphosphooxymethyl)pyrimidine. 2-[(2R,5Z)-2-carboxy-4-methylthiazol-5(2H)-ylidene]ethyl phosphate contacts are provided by residues Gly165 and 185–186 (VS).

This sequence belongs to the thiamine-phosphate synthase family. The cofactor is Mg(2+).

It carries out the reaction 2-[(2R,5Z)-2-carboxy-4-methylthiazol-5(2H)-ylidene]ethyl phosphate + 4-amino-2-methyl-5-(diphosphooxymethyl)pyrimidine + 2 H(+) = thiamine phosphate + CO2 + diphosphate. The enzyme catalyses 2-(2-carboxy-4-methylthiazol-5-yl)ethyl phosphate + 4-amino-2-methyl-5-(diphosphooxymethyl)pyrimidine + 2 H(+) = thiamine phosphate + CO2 + diphosphate. The catalysed reaction is 4-methyl-5-(2-phosphooxyethyl)-thiazole + 4-amino-2-methyl-5-(diphosphooxymethyl)pyrimidine + H(+) = thiamine phosphate + diphosphate. Its pathway is cofactor biosynthesis; thiamine diphosphate biosynthesis; thiamine phosphate from 4-amino-2-methyl-5-diphosphomethylpyrimidine and 4-methyl-5-(2-phosphoethyl)-thiazole: step 1/1. Condenses 4-methyl-5-(beta-hydroxyethyl)thiazole monophosphate (THZ-P) and 2-methyl-4-amino-5-hydroxymethyl pyrimidine pyrophosphate (HMP-PP) to form thiamine monophosphate (TMP). In Persephonella marina (strain DSM 14350 / EX-H1), this protein is Thiamine-phosphate synthase.